A 162-amino-acid chain; its full sequence is NADH-quinone oxidoreductase subunit I (162 aa).

2 consecutive 4Fe-4S ferredoxin-type domains span residues 54-83 (RRYE…IESE) and 93-122 (TRYD…ETQI). Cysteine 63, cysteine 66, cysteine 69, cysteine 73, cysteine 102, cysteine 105, cysteine 108, and cysteine 112 together coordinate [4Fe-4S] cluster.

This sequence belongs to the complex I 23 kDa subunit family. As to quaternary structure, NDH-1 is composed of 14 different subunits. Subunits NuoA, H, J, K, L, M, N constitute the membrane sector of the complex. It depends on [4Fe-4S] cluster as a cofactor.

The protein resides in the cell inner membrane. The enzyme catalyses a quinone + NADH + 5 H(+)(in) = a quinol + NAD(+) + 4 H(+)(out). Its function is as follows. NDH-1 shuttles electrons from NADH, via FMN and iron-sulfur (Fe-S) centers, to quinones in the respiratory chain. The immediate electron acceptor for the enzyme in this species is believed to be ubiquinone. Couples the redox reaction to proton translocation (for every two electrons transferred, four hydrogen ions are translocated across the cytoplasmic membrane), and thus conserves the redox energy in a proton gradient. This is NADH-quinone oxidoreductase subunit I from Burkholderia thailandensis (strain ATCC 700388 / DSM 13276 / CCUG 48851 / CIP 106301 / E264).